Here is a 351-residue protein sequence, read N- to C-terminus: Phospho-N-acetylmuramoyl-pentapeptide-transferase (351 aa).

10 helical membrane passes run 17-37 (TAYA…FIIS), 61-83 (MGIP…FFWI), 88-105 (IYFL…CLGF), 130-150 (ILFS…HVSI), 158-178 (SLKL…LISA), 190-210 (GLAI…AYLT), 230-250 (LVIF…FNAY), 254-274 (IMMG…VALI), 279-299 (ILFA…IIQV), and 328-348 (QVVI…LSTI).

It belongs to the glycosyltransferase 4 family. MraY subfamily. Mg(2+) serves as cofactor.

It is found in the cell inner membrane. The catalysed reaction is UDP-N-acetyl-alpha-D-muramoyl-L-alanyl-gamma-D-glutamyl-meso-2,6-diaminopimeloyl-D-alanyl-D-alanine + di-trans,octa-cis-undecaprenyl phosphate = di-trans,octa-cis-undecaprenyl diphospho-N-acetyl-alpha-D-muramoyl-L-alanyl-D-glutamyl-meso-2,6-diaminopimeloyl-D-alanyl-D-alanine + UMP. Its pathway is cell wall biogenesis; peptidoglycan biosynthesis. Catalyzes the initial step of the lipid cycle reactions in the biosynthesis of the cell wall peptidoglycan: transfers peptidoglycan precursor phospho-MurNAc-pentapeptide from UDP-MurNAc-pentapeptide onto the lipid carrier undecaprenyl phosphate, yielding undecaprenyl-pyrophosphoryl-MurNAc-pentapeptide, known as lipid I. This is Phospho-N-acetylmuramoyl-pentapeptide-transferase from Borrelia duttonii (strain Ly).